A 403-amino-acid chain; its full sequence is MSDLSPERFKLAVTSPSSIPESSSALQLHHSYSRKQKSLGLLCTNFLALYNREGIEMVGLDDAASKLGVERRRIYDIVNVLESVGVLTRRAKNQYTWKGFSAIPGALKELQEEGVKDTFHRFYVNENVKGSDDEDDDEESSQPHSSSQTDSSKPGSLPQSSDPSKIDNRREKSLGLLTQNFIKLFICSEAIRIISLDDAAKLLLGDAHNTSIMRTKVRRLYDIANVLSSMNLIEKTHTLDSRKPAFKWLGYNGEPTFTLSSDLLQLESRKRAFGTDITNVNVKRSKSSSSSQENATERRLKMKKHSTPESSYNKSFDVHESRHGSRGGYHFGPFAPGTGTYPTAGLEDNSRRAFDVENLDSDYRPSYQNQVLKDLFSHYMDAWKTWFSEVTQENPLPNTSQHR.

Residues 34 to 99 (RKQKSLGLLC…RAKNQYTWKG (66 aa)) mediate DNA binding. Residues 128–167 (VKGSDDEDDDEESSQPHSSSQTDSSKPGSLPQSSDPSKID) form a disordered region. Low complexity predominate over residues 142 to 152 (QPHSSSQTDSS). Positions 153-163 (KPGSLPQSSDP) are enriched in polar residues. The DNA-binding element occupies 169–250 (RREKSLGLLT…SRKPAFKWLG (82 aa)). Positions 282–319 (VKRSKSSSSSQENATERRLKMKKHSTPESSYNKSFDVH) are disordered.

This sequence belongs to the E2F/DP family. As to expression, expressed exclusively in mitotically dividing cells. Highly expressed in young leaves and mature flowers. Lower expression in young stalk and in young and mature flowers.

It is found in the nucleus. In terms of biological role, inhibitor of E2F-dependent activation of gene expression. Binds specifically the E2 recognition site without interacting with DP proteins and prevents transcription activation by E2F/DP heterodimers. Controls the timing of endocycle onset and inhibits endoreduplication. In Arabidopsis thaliana (Mouse-ear cress), this protein is E2F transcription factor-like E2FE (E2FE).